Here is an 861-residue protein sequence, read N- to C-terminus: Probable beta-glucosidase A (861 aa).

The first 19 residues, 1–19 (MKLSILEAAALTAASVVSA), serve as a signal peptide directing secretion. N-linked (GlcNAc...) asparagine glycans are attached at residues asparagine 62, asparagine 212, and asparagine 253. Residue aspartate 281 is part of the active site. N-linked (GlcNAc...) asparagine glycosylation is found at asparagine 316, asparagine 323, asparagine 355, asparagine 524, asparagine 543, asparagine 565, asparagine 669, and asparagine 713. The interval 735-754 (PEGATDGSPQPRLPASGGPG) is disordered.

Belongs to the glycosyl hydrolase 3 family.

Its subcellular location is the secreted. The catalysed reaction is Hydrolysis of terminal, non-reducing beta-D-glucosyl residues with release of beta-D-glucose.. Its pathway is glycan metabolism; cellulose degradation. In terms of biological role, beta-glucosidases are one of a number of cellulolytic enzymes involved in the degradation of cellulosic biomass. Catalyzes the last step releasing glucose from the inhibitory cellobiose. This Aspergillus terreus (strain NIH 2624 / FGSC A1156) protein is Probable beta-glucosidase A (bglA).